The following is a 91-amino-acid chain: Acylphosphatase (91 aa).

Residues 3 to 91 (HIKVNVKGQV…TELTKFEVKY (89 aa)) enclose the Acylphosphatase-like domain. Catalysis depends on residues Arg-18 and Asn-36.

It belongs to the acylphosphatase family.

The catalysed reaction is an acyl phosphate + H2O = a carboxylate + phosphate + H(+). This is Acylphosphatase (acyP) from Oceanobacillus iheyensis (strain DSM 14371 / CIP 107618 / JCM 11309 / KCTC 3954 / HTE831).